A 422-amino-acid polypeptide reads, in one-letter code: Synaptotagmin-1 (422 aa).

Residues 1 to 57 lie on the Vesicular side of the membrane; that stretch reads MVSESHHEALAAPPVTTVATVLPHNATEPASPGEGKEDAFSKLKEKFMNELHKIPLP. N25 carries N-linked (GlcNAc...) asparagine glycosylation. The chain crosses the membrane as a helical span at residues 58–80; it reads PWALIAIAIVAVLLVLTCCFCIC. Residues C75, C76, C78, C80, and C83 are each lipidated (S-palmitoyl cysteine). Topologically, residues 81-422 are cytoplasmic; the sequence is KKCLFKKKNK…EVDAMLAVKK (342 aa). The disordered stretch occupies residues 113–142; sequence TMKDQALKDDDAETGLTDGEEKEEPKEEEK. Positions 122-134 are enriched in acidic residues; that stretch reads DDAETGLTDGEEK. T129 bears the Phosphothreonine mark. The phospholipid binding stretch occupies residues 136–382; the sequence is EPKEEEKLGK…AIGKVFVGYN (247 aa). Residues 142-261 form the C2 1 domain; the sequence is KLGKLQYSLD…DFGHVTEEWR (120 aa). Ca(2+)-binding residues include L172, D173, and D179. Y230 bears the Phosphotyrosine mark. 6 residues coordinate Ca(2+): D231, F232, D233, S236, K237, and D239. S265 bears the Phosphoserine mark. The region spanning 273–406 is the C2 2 domain; it reads KLGDICFSLR…NPRRPIAQWH (134 aa). Ca(2+) contacts are provided by D304 and D310. S343 and S345 each carry phosphoserine. Ca(2+)-binding residues include D364, D366, and D372.

Belongs to the synaptotagmin family. Homotetramer. Heterodimer; heterodimerizes with SYT2 in presence of calcium. Interacts with SCAMP5. Interacts with STON2. Forms a complex with SV2B, syntaxin 1 and SNAP25. Interacts with SV2A, SV2B and SV2C. Interacts with RIMS1. Interacts with PRRT2. Interacts with DNAJC5 in a phosphorylation-dependent manner. Interacts (via N-terminus) with RAB3A. Interacts with SYT12. Interacts with calmodulin. Interacts with DNM1 (via C-terminal proline-rich domain (PRD)); this interaction facilitates vesicle fission during clathrin-mediated endocytosis (CME). Requires Ca(2+) as cofactor. In terms of processing, glycosylated.

The protein resides in the cytoplasmic vesicle. Its subcellular location is the secretory vesicle membrane. It localises to the secretory vesicle. It is found in the synaptic vesicle membrane. The protein localises to the chromaffin granule membrane. The protein resides in the cytoplasm. Its function is as follows. Calcium sensor that participates in triggering neurotransmitter release at the synapse. May have a regulatory role in the membrane interactions during trafficking of synaptic vesicles at the active zone of the synapse. It binds acidic phospholipids with a specificity that requires the presence of both an acidic head group and a diacyl backbone. A Ca(2+)-dependent interaction between synaptotagmin and putative receptors for activated protein kinase C has also been reported. It can bind to at least three additional proteins in a Ca(2+)-independent manner; these are neurexins, syntaxin and AP2. Plays a role in dendrite formation by melanocytes. This chain is Synaptotagmin-1, found in Bos taurus (Bovine).